A 191-amino-acid chain; its full sequence is Calcium-activated potassium channel subunit beta-1 (191 aa).

Residues M1–C18 lie on the Cytoplasmic side of the membrane. Residues L19–L39 form a helical membrane-spanning segment. Topologically, residues P40–Q155 are extracellular. N-linked (GlcNAc...) asparagine glycans are attached at residues N80 and N142. A helical membrane pass occupies residues V156 to A176. At M177–K191 the chain is on the cytoplasmic side.

This sequence belongs to the KCNMB (TC 8.A.14.1) family. KCNMB1 subfamily. As to quaternary structure, interacts with KCNMA1 tetramer. There are probably 4 molecules of KCMNB1 per KCNMA1 tetramer. Post-translationally, N-glycosylated. In terms of tissue distribution, expressed in many tissues containing smooth muscles. In brain and heart, it is not expressed except in the vasculature, such as cerebral arteries, aorta and corona arteries.

The protein resides in the membrane. Functionally, regulatory subunit of the calcium activated potassium KCNMA1 (maxiK) channel. Modulates the calcium sensitivity and gating kinetics of KCNMA1, thereby contributing to KCNMA1 channel diversity. Increases the apparent Ca(2+)/voltage sensitivity of the KCNMA1 channel. It also modifies KCNMA1 channel kinetics and alters its pharmacological properties. It slows down the activation and the deactivation kinetics of the channel. Acts as a negative regulator of smooth muscle contraction by enhancing the calcium sensitivity to KCNMA1. Its presence is also a requirement for internal binding of the KCNMA1 channel opener dehydrosoyasaponin I (DHS-1) triterpene glycoside and for external binding of the agonist hormone 17-beta-estradiol (E2). Increases the binding activity of charybdotoxin (CTX) toxin to KCNMA1 peptide blocker by increasing the CTX association rate and decreasing the dissociation rate. This is Calcium-activated potassium channel subunit beta-1 (Kcnmb1) from Mus musculus (Mouse).